The following is a 70-amino-acid chain: Insulin (70 aa).

Cystine bridges form between Cys7/Cys56, Cys19/Cys69, and Cys55/Cys60. The propeptide at 33 to 49 is c peptide; it reads FVDSLAGYSKHQNGGIS.

Belongs to the insulin family. In terms of assembly, heterodimer of a B chain and an A chain linked by two disulfide bonds.

The protein localises to the secreted. Functionally, insulin decreases blood glucose concentration. It increases cell permeability to monosaccharides, amino acids and fatty acids. It accelerates glycolysis, the pentose phosphate cycle, and glycogen synthesis in liver. This Torpedo marmorata (Marbled electric ray) protein is Insulin (ins).